Here is a 198-residue protein sequence, read N- to C-terminus: NAD(P)H-quinone oxidoreductase chain 6 (198 aa).

5 helical membrane passes run 9 to 29 (YISF…VVLL), 32 to 52 (IVYS…IYIL), 61 to 81 (AQVL…IMLV), 100 to 120 (TALV…ITPW), and 145 to 165 (LLPF…AIIL).

It belongs to the complex I subunit 6 family.

The protein localises to the membrane. It catalyses the reaction a plastoquinone + NADH + (n+1) H(+)(in) = a plastoquinol + NAD(+) + n H(+)(out). The enzyme catalyses a plastoquinone + NADPH + (n+1) H(+)(in) = a plastoquinol + NADP(+) + n H(+)(out). Functionally, NDH-1 shuttles electrons from NAD(P)H, via FMN and iron-sulfur (Fe-S) centers, to quinones in the respiratory chain. The immediate electron acceptor for the enzyme in this species is believed to be plastoquinone. Couples the redox reaction to proton translocation (for every two electrons transferred, four hydrogen ions are translocated across the cytoplasmic membrane), and thus conserves the redox energy in a proton gradient. The chain is NAD(P)H-quinone oxidoreductase chain 6 (ndhG) from Synechocystis sp. (strain ATCC 27184 / PCC 6803 / Kazusa).